Here is a 260-residue protein sequence, read N- to C-terminus: DNA repair protein RecO (260 aa).

This sequence belongs to the RecO family.

Its function is as follows. Involved in DNA repair and RecF pathway recombination. This is DNA repair protein RecO from Salinibacter ruber (strain DSM 13855 / M31).